A 438-amino-acid polypeptide reads, in one-letter code: Vasoactive intestinal polypeptide receptor 2 (438 aa).

The first 23 residues, 1 to 23 (MRTLLPPALLTCWLLAPVNSIHP), serve as a signal peptide directing secretion. The Extracellular segment spans residues 24-124 (ECRFHLEIQE…EDESKITFYI (101 aa)). 3 cysteine pairs are disulfide-bonded: C38–C61, C52–C93, and C75–C109. N-linked (GlcNAc...) asparagine glycosylation is found at N58, N88, and N92. A helical membrane pass occupies residues 125-150 (LVKAIYTLGYSVSLMSLATGSIILCL). The Cytoplasmic segment spans residues 151-158 (FRKLHCTR). A helical transmembrane segment spans residues 159 to 180 (NYIHLNLFLSFILRAISVLVKD). The Extracellular portion of the chain corresponds to 181-203 (DVLYSSSGTLHCPDQPSSWVGCK). C202 and C271 are oxidised to a cystine. The helical transmembrane segment at 204 to 228 (LSLVFLQYCIMANFFWLLVEGLYLH) threads the bilayer. Residues 229-239 (TLLVAMLPPRR) are Cytoplasmic-facing. Residues 240 to 261 (CFLAYLLIGWGLPTVCIGAWTA) traverse the membrane as a helical segment. Residues 262 to 280 (ARLYLEDTGCWDTNDHSVP) are Extracellular-facing. The chain crosses the membrane as a helical span at residues 281–304 (WWVIRIPILISIIVNFVLFISIIR). Residues 305 to 325 (ILLQKLTSPDVGGNDQSQYKR) lie on the Cytoplasmic side of the membrane. A helical transmembrane segment spans residues 326–346 (LAKSTLLLIPLFGVHYMVFAV). The Extracellular portion of the chain corresponds to 347–354 (FPISISSK). The helical transmembrane segment at 355–378 (YQILFELCLGSFQGLVVAVLYCFL) threads the bilayer. The Cytoplasmic segment spans residues 379 to 438 (NSEVQCELKRKWRSRCPTPSASRDYRVCGSSFSRNGSEGALQFHRGSRAQSFLQTETSVI).

It belongs to the G-protein coupled receptor 2 family. In terms of assembly, interacts with ADCYAP1/PACAP (via N-terminal extracellular domain); activated by PACAP27 and CAPAC38 neuropeptides. Interacts with VIP; the interaction results in VIPR1 activation. Expressed in CD4+ T-cells, but not in CD8+ T-cells. Expressed in the T-cell lines Jurkat, Peer, MOLT-4, HSB, YT and SUP-T1, but not in the T-cell lines HARRIS and HuT 78.

Its subcellular location is the cell membrane. Its function is as follows. G protein-coupled receptor activated by the neuropeptides vasoactive intestinal peptide (VIP) and pituitary adenylate cyclase-activating polypeptide (ADCYAP1/PACAP). Binds VIP and both PACAP27 and PACAP38 bioactive peptides with the following order of potency PACAP38 = VIP &gt; PACAP27. Ligand binding causes a conformation change that triggers signaling via guanine nucleotide-binding proteins (G proteins) and modulates the activity of downstream effectors. Activates cAMP-dependent pathway. May be coupled to phospholipase C. The protein is Vasoactive intestinal polypeptide receptor 2 of Homo sapiens (Human).